A 97-amino-acid polypeptide reads, in one-letter code: MKKMLLATALALLITGCAQQTFTVQNKQTAVAPKETITHHFFVSGIGQKKTVDAAKICGGAENVVKTETQQTFVNGLLGFITLGIYTPLEARVYCSK.

Positions 1–16 (MKKMLLATALALLITG) are cleaved as a signal peptide. Cys17 carries the N-palmitoyl cysteine lipid modification. The S-diacylglycerol cysteine moiety is linked to residue Cys17.

The protein belongs to the lambda phage bor family.

Its subcellular location is the cell membrane. The polypeptide is Prophage lipoprotein Bor homolog (borD) (Escherichia coli (strain K12)).